The chain runs to 610 residues: tRNA uridine 5-carboxymethylaminomethyl modification enzyme MnmG (610 aa).

FAD is bound at residue 14-19; it reads GAGHAG. Residue 274-288 coordinates NAD(+); that stretch reads GPRYCPSIEDKIVKF.

Belongs to the MnmG family. Homodimer. Heterotetramer of two MnmE and two MnmG subunits. FAD serves as cofactor.

It localises to the cytoplasm. Functionally, NAD-binding protein involved in the addition of a carboxymethylaminomethyl (cmnm) group at the wobble position (U34) of certain tRNAs, forming tRNA-cmnm(5)s(2)U34. The protein is tRNA uridine 5-carboxymethylaminomethyl modification enzyme MnmG of Chlamydia trachomatis serovar D (strain ATCC VR-885 / DSM 19411 / UW-3/Cx).